The following is a 261-amino-acid chain: MVICNAIIVLLLAFNTLANPILPSSPNATIVGGQKAKAGECPYQISLQSSSHFCGGTILDEYWILTAAHCVNGQTASKLSIRYNSLKHASGGEKLSVAQIYQHEKYDSWTIDNDIALIKLQSPMTLDQKNAKSVQLPSQGSDVKVGDKVRVSGWGYLKEGSYSLPSDMYRVDIDIVAREQCNKLYEEAGATITDNMICGGNVADGGVDSCQGDSGGPVVDVASNQIVGIVSWGYGCARKGYPGVYTRVGSFIDWIDSKRSQ.

The first 18 residues, 1-18 (MVICNAIIVLLLAFNTLA), serve as a signal peptide directing secretion. A propeptide spanning residues 19-29 (NPILPSSPNAT) is cleaved from the precursor. A Peptidase S1 domain is found at 30 to 260 (IVGGQKAKAG…FIDWIDSKRS (231 aa)). Cysteine 54 and cysteine 70 form a disulfide bridge. Catalysis depends on charge relay system residues histidine 69 and aspartate 114. Cystine bridges form between cysteine 181-cysteine 198 and cysteine 210-cysteine 236. The active-site Charge relay system is the serine 214.

It belongs to the peptidase S1 family.

The protein localises to the secreted. The sequence is that of Mite allergen Eur m 3 (EURM3) from Euroglyphus maynei (Mayne's house dust mite).